The primary structure comprises 220 residues: 2-dehydro-3-deoxy-phosphogluconate aldolase (220 aa).

Catalysis depends on E48, which acts as the Proton acceptor. Positions 52, 76, and 136 each coordinate pyruvate. Residue K136 is the Schiff-base intermediate with substrate of the active site.

This sequence belongs to the KHG/KDPG aldolase family. In terms of assembly, homotrimer.

It catalyses the reaction 2-dehydro-3-deoxy-6-phospho-D-gluconate = D-glyceraldehyde 3-phosphate + pyruvate. It functions in the pathway carbohydrate acid metabolism; 2-dehydro-3-deoxy-D-gluconate degradation; D-glyceraldehyde 3-phosphate and pyruvate from 2-dehydro-3-deoxy-D-gluconate: step 2/2. Involved in the degradation of glucose via the Entner-Doudoroff pathway. Catalyzes the reversible, stereospecific retro-aldol cleavage of 2-keto-3-deoxy-6-phosphogluconate (KDPG) to pyruvate and D-glyceraldehyde-3-phosphate. This Pseudomonas aeruginosa (strain ATCC 15692 / DSM 22644 / CIP 104116 / JCM 14847 / LMG 12228 / 1C / PRS 101 / PAO1) protein is 2-dehydro-3-deoxy-phosphogluconate aldolase (eda).